The following is a 183-amino-acid chain: NADH-quinone oxidoreductase subunit I (183 aa).

4Fe-4S ferredoxin-type domains follow at residues 44 to 74 (LNRW…VEAG) and 90 to 119 (RVYQ…MTNE). Residues C54, C57, C60, C64, C99, C102, C105, and C109 each coordinate [4Fe-4S] cluster. Residues 143–183 (QGMEAPPHPMRLGETEKDYYRLGRDDNAAARADEQNSEAVQ) are disordered. Over residues 153 to 176 (RLGETEKDYYRLGRDDNAAARADE) the composition is skewed to basic and acidic residues.

It belongs to the complex I 23 kDa subunit family. In terms of assembly, NDH-1 is composed of 14 different subunits. Subunits NuoA, H, J, K, L, M, N constitute the membrane sector of the complex. It depends on [4Fe-4S] cluster as a cofactor.

Its subcellular location is the cell membrane. It catalyses the reaction a quinone + NADH + 5 H(+)(in) = a quinol + NAD(+) + 4 H(+)(out). NDH-1 shuttles electrons from NADH, via FMN and iron-sulfur (Fe-S) centers, to quinones in the respiratory chain. The immediate electron acceptor for the enzyme in this species is believed to be ubiquinone. Couples the redox reaction to proton translocation (for every two electrons transferred, four hydrogen ions are translocated across the cytoplasmic membrane), and thus conserves the redox energy in a proton gradient. The sequence is that of NADH-quinone oxidoreductase subunit I from Thermobifida fusca (strain YX).